We begin with the raw amino-acid sequence, 517 residues long: MDKDNQALDELPMMTGSKHANKRLFAAFMIFGLLNNVLYVIILSAALDLVSADTPKGVVALFNIFPALITKVVWPLLSNGKIRYTRRVGFCTICSWFGIITIALSSSLSPRLLGISLASLSSGMGELTFLQLTTTLPTEATSKTALGAWSSGTGFAGVAGAGIWWLLRGLGVKGGLGLSSFLPLFFPITYKYILPPFSHLEASSDSSPYQRLPTSSSLSNNNNFRPPAILISVPSSEYVPQHTPLLSSGFIDRDRDRNRDGEELTDGDKRLMGMRASRLTTQEKMKLLRPLVVRYMLPLCAVYVEEYVINSGVAPTLVFPLPTYGLWSWLFKSPRDYYPFWSLTYQTFVFLSRSSLSLGLPPIPKRLLPLPAIIQFLVLSLLFLQAKTFFFSSPAYTPPADGDGGVDRSITIVFLLICLEGLCGGSGYVNTFYHVGREGSSVSENYDADGENEMGGDRRTLNVTEMEKKAMEREFRIGAVGAADSTGILFASLISMPLEIALCRSQVDQGRTMCREL.

Transmembrane regions (helical) follow at residues L24–S44, G57–L77, V88–L108, L112–L132, L146–L166, G169–T189, P371–F391, and S409–V429.

It belongs to the battenin family.

It is found in the vacuole membrane. Functionally, involved in vacuolar transport and vacuole pH homeostasis. Also required for cytokinesis. This is Protein BTN1 (BTN1) from Cryptococcus neoformans var. neoformans serotype D (strain B-3501A) (Filobasidiella neoformans).